Here is a 338-residue protein sequence, read N- to C-terminus: Nucleoid-associated protein VSAL_I1059 (338 aa).

The interval 319–338 is disordered; sequence KGTPPNLKDQLTRRLGSSES.

It belongs to the YejK family.

It is found in the cytoplasm. Its subcellular location is the nucleoid. The polypeptide is Nucleoid-associated protein VSAL_I1059 (Aliivibrio salmonicida (strain LFI1238) (Vibrio salmonicida (strain LFI1238))).